The chain runs to 260 residues: DNA repair protein RecO (260 aa).

The protein belongs to the RecO family.

Its function is as follows. Involved in DNA repair and RecF pathway recombination. This is DNA repair protein RecO from Desulfosudis oleivorans (strain DSM 6200 / JCM 39069 / Hxd3) (Desulfococcus oleovorans).